The primary structure comprises 267 residues: PF03932 family protein CutC (267 aa).

It belongs to the CutC family.

The protein localises to the cytoplasm. The sequence is that of PF03932 family protein CutC from Xylella fastidiosa (strain Temecula1 / ATCC 700964).